A 102-amino-acid chain; its full sequence is MNSQNIRIRLKAFDHRILDTSTREIVSTAKRTGANVRGPIPLPTRIEKFTVNRGPHIDKKSREQFEMRTHKRLLDIVDPTPQTVDALMKLDLSAGVDVEIKL.

The protein belongs to the universal ribosomal protein uS10 family. As to quaternary structure, part of the 30S ribosomal subunit.

In terms of biological role, involved in the binding of tRNA to the ribosomes. This chain is Small ribosomal subunit protein uS10, found in Bartonella tribocorum (strain CIP 105476 / IBS 506).